The sequence spans 373 residues: Putative glutamate--cysteine ligase 2-1 (373 aa).

The protein belongs to the glutamate--cysteine ligase type 2 family. YbdK subfamily.

It carries out the reaction L-cysteine + L-glutamate + ATP = gamma-L-glutamyl-L-cysteine + ADP + phosphate + H(+). ATP-dependent carboxylate-amine ligase which exhibits weak glutamate--cysteine ligase activity. The protein is Putative glutamate--cysteine ligase 2-1 of Legionella pneumophila (strain Paris).